We begin with the raw amino-acid sequence, 201 residues long: Ubiquinone biosynthesis accessory factor UbiJ (201 aa).

Positions 15–112 (LNTFLYRSPA…QVVQNFVALA (98 aa)) constitute an SCP2 domain.

This sequence belongs to the UbiJ family.

It localises to the cytoplasm. It functions in the pathway cofactor biosynthesis; ubiquinone biosynthesis. Required for ubiquinone (coenzyme Q) biosynthesis under aerobic conditions. Binds hydrophobic ubiquinone biosynthetic intermediates via its SCP2 domain and is essential for the stability of the Ubi complex. May constitute a docking platform where Ubi enzymes assemble and access their SCP2-bound polyprenyl substrates. Required for intracellular proliferation in macrophages. In Salmonella typhimurium (strain LT2 / SGSC1412 / ATCC 700720), this protein is Ubiquinone biosynthesis accessory factor UbiJ.